A 391-amino-acid chain; its full sequence is Chalcone synthase (391 aa).

Residue cysteine 164 is part of the active site.

This sequence belongs to the thiolase-like superfamily. Chalcone/stilbene synthases family.

It catalyses the reaction (E)-4-coumaroyl-CoA + 3 malonyl-CoA + 3 H(+) = 2',4,4',6'-tetrahydroxychalcone + 3 CO2 + 4 CoA. It functions in the pathway secondary metabolite biosynthesis; flavonoid biosynthesis. Its function is as follows. The primary product of this enzyme is 4,2',4',6'-tetrahydroxychalcone (also termed naringenin-chalcone or chalcone) which can under specific conditions spontaneously isomerize into naringenin. This is Chalcone synthase (CHS) from Dianthus caryophyllus (Carnation).